A 1454-amino-acid polypeptide reads, in one-letter code: E3 ubiquitin-protein ligase substrate receptor MMS22 (1454 aa).

A disordered region spans residues 159 to 178; the sequence is NSSVQSQRYDSDEEIPKKRH. The segment at 1201–1454 is required for interaction with MMS1; sequence YDEGDISRNF…SEPFKTFKNT (254 aa).

This sequence belongs to the MMS22 family. As to quaternary structure, component of a cullin-RING ligase (CRL) composed of 4 subunits: the RING protein HRT1, the cullin RTT101, a linker protein MMS1, and the substrate receptor MMS22. This complex further interacts with RTT107 and CTF4 to form RTT101-MMS1-MMS22-RTT107 and RTT101-MMS1-MMS22-CTF4 complexes respectively. Interacts (via C-ter) with MMS1 (via N-ter). Interacts with RTT107.

The protein localises to the nucleus. Its function is as follows. Substrate targeting component of a cullin-RING-based E3 ubiquitin-protein ligase complex RTT101(MMS1-MMS22). RTT101(MMS1-MMS22) promotes fork progression through damaged DNA or natural pause sites by stabilizing replication proteins like the replication fork-pausing complex (FPC) and leading-strand polymerase at stalled replication forks. RTT101(MMS1-MMS22) ubiquitinates the acetylated histones H3K56ac-H4 at lysine residues H3K121, H3K122 and H3K125. Ubiquitination is required for efficient histone deposition during replication-coupled nucleosome assembly, probably by facilitating the transfer of H3-H4 from ASF1 to other chaperones involved in histone deposition. The sequence is that of E3 ubiquitin-protein ligase substrate receptor MMS22 (MMS22) from Saccharomyces cerevisiae (strain ATCC 204508 / S288c) (Baker's yeast).